Consider the following 269-residue polypeptide: MNPLHATVLGAIQGLTEVLPVSSSAHLILIPWLFGWPESGITFDVALHLGTLIALALYFRRDIAELVVNALSGLTGGAHSSATRLPWYIIAGCVPAAIVGKTLEEPIEAIFRANPAIIAAFLIGFGLLLALADTLGSKKSRMDQIDLKNAMMIGLAQCLALLPGVSRSGITITAALFLGFSRETAARFSFLLSLPIVAGAALLKVGHLVRHGVPEGELQPLLIGVGVSAVFGYVSVALLLKLVQRYSLYPFVWYRLLAGAGVLLFIFNQ.

7 consecutive transmembrane segments (helical) span residues 40 to 59, 87 to 107, 116 to 136, 160 to 180, 188 to 208, 220 to 240, and 247 to 267; these read GITF…ALYF, WYII…EEPI, AIIA…DTLG, ALLP…FLGF, FSFL…VGHL, PLLI…ALLL, and SLYP…LFIF.

Belongs to the UppP family.

It localises to the cell inner membrane. It catalyses the reaction di-trans,octa-cis-undecaprenyl diphosphate + H2O = di-trans,octa-cis-undecaprenyl phosphate + phosphate + H(+). Catalyzes the dephosphorylation of undecaprenyl diphosphate (UPP). Confers resistance to bacitracin. In Geobacter metallireducens (strain ATCC 53774 / DSM 7210 / GS-15), this protein is Undecaprenyl-diphosphatase.